Consider the following 265-residue polypeptide: Deoxyguanosine kinase, mitochondrial (265 aa).

Glycine 32–threonine 40 provides a ligand contact to ATP. Positions 57, 88, 99, and 106 each coordinate substrate. Glutamate 129 serves as the catalytic Proton acceptor. 2 residues coordinate substrate: arginine 130 and aspartate 135. Arginine 190–arginine 194 serves as a coordination point for ATP. Glutamate 199 contacts substrate. Position 242–244 (glutamate 242–phenylalanine 244) interacts with ATP.

This sequence belongs to the DCK/DGK family. Homodimer.

The protein resides in the mitochondrion. It catalyses the reaction 2'-deoxyguanosine + ATP = dGMP + ADP + H(+). Its function is as follows. Phosphorylates deoxyguanosine in the mitochondrial matrix with high efficiency but shows very low activity against other deoxynucleosides. This Xenopus laevis (African clawed frog) protein is Deoxyguanosine kinase, mitochondrial.